The chain runs to 233 residues: Glycerol-3-phosphate acyltransferase (233 aa).

A run of 5 helical transmembrane segments spans residues 7–27 (WIIIAIICSYLIGAIPFGYII), 94–114 (ISIVFGAAAAIGHIKSIYIGF), 127–147 (VIAINPIIGLSGIGLFFIVAF), 153–173 (SIGSVVASFSVAVMMWIGVLI), and 185–205 (ISYESQIINLVAISLIVLLII).

Belongs to the PlsY family. In terms of assembly, probably interacts with PlsX.

It localises to the cell membrane. It catalyses the reaction an acyl phosphate + sn-glycerol 3-phosphate = a 1-acyl-sn-glycero-3-phosphate + phosphate. Its pathway is lipid metabolism; phospholipid metabolism. Catalyzes the transfer of an acyl group from acyl-phosphate (acyl-PO(4)) to glycerol-3-phosphate (G3P) to form lysophosphatidic acid (LPA). This enzyme utilizes acyl-phosphate as fatty acyl donor, but not acyl-CoA or acyl-ACP. The chain is Glycerol-3-phosphate acyltransferase from Acholeplasma laidlawii.